A 500-amino-acid polypeptide reads, in one-letter code: NAD(P)H-quinone oxidoreductase subunit 2, chloroplastic (500 aa).

Transmembrane regions (helical) follow at residues 15–35 (ILPE…DLSL), 42–62 (WIIY…CLQW), 79–99 (FSIA…LLSI), 109–129 (LMEF…LCGA), 132–152 (LITI…LAGY), 167–187 (LLVG…LYGL), 201–221 (LIFA…CIIV), 247–267 (VVAF…IRII), 278–298 (WQFL…LVAI), 306–326 (MLAY…ISST), 334–354 (LVYM…VILF), 377–397 (ASCL…AGFF), and 400–420 (IYLF…VGLL).

This sequence belongs to the complex I subunit 2 family. In terms of assembly, NDH is composed of at least 16 different subunits, 5 of which are encoded in the nucleus.

It is found in the plastid. Its subcellular location is the chloroplast thylakoid membrane. It carries out the reaction a plastoquinone + NADH + (n+1) H(+)(in) = a plastoquinol + NAD(+) + n H(+)(out). The catalysed reaction is a plastoquinone + NADPH + (n+1) H(+)(in) = a plastoquinol + NADP(+) + n H(+)(out). Its function is as follows. NDH shuttles electrons from NAD(P)H:plastoquinone, via FMN and iron-sulfur (Fe-S) centers, to quinones in the photosynthetic chain and possibly in a chloroplast respiratory chain. The immediate electron acceptor for the enzyme in this species is believed to be plastoquinone. Couples the redox reaction to proton translocation, and thus conserves the redox energy in a proton gradient. The sequence is that of NAD(P)H-quinone oxidoreductase subunit 2, chloroplastic from Chaetosphaeridium globosum (Charophycean green alga).